The sequence spans 276 residues: 2-hydroxy-6-oxo-2,4-heptadienoate hydrolase (276 aa).

The AB hydrolase-1 domain maps to 28-259 (NPVVLVHGSG…GRCGHWVQIE (232 aa)). Catalysis depends on residues S105, D226, and H254.

It belongs to the DmpD/TodF/XylF esterase family.

It catalyses the reaction (2Z,4E)-2-hydroxy-6-oxohepta-2,4-dienoate + H2O = (2Z)-2-hydroxypenta-2,4-dienoate + acetate + H(+). Its pathway is xenobiotic degradation; toluene degradation. Functionally, catalyzes the hydrolysis of 2-hydroxy-6-oxohepta-2,4-dienoate into 2-hydroxypenta-2,4-dienoate and acetate. The sequence is that of 2-hydroxy-6-oxo-2,4-heptadienoate hydrolase (todF) from Pseudomonas putida (strain ATCC 700007 / DSM 6899 / JCM 31910 / BCRC 17059 / LMG 24140 / F1).